Here is a 229-residue protein sequence, read N- to C-terminus: Ribonuclease HII (229 aa).

An RNase H type-2 domain is found at 34–223; that stretch reads WPVAGADEAG…LRKSEDGPEM (190 aa). A divalent metal cation contacts are provided by Asp40, Glu41, and Asp131. The segment at 209 to 229 is disordered; that stretch reads MSFRPLRKSEDGPEMDELIPE. The segment covering 220 to 229 has biased composition (acidic residues); it reads GPEMDELIPE.

It belongs to the RNase HII family. Requires Mn(2+) as cofactor. Mg(2+) is required as a cofactor.

The protein resides in the cytoplasm. It carries out the reaction Endonucleolytic cleavage to 5'-phosphomonoester.. In terms of biological role, endonuclease that specifically degrades the RNA of RNA-DNA hybrids. This is Ribonuclease HII from Rhizobium etli (strain CIAT 652).